Reading from the N-terminus, the 104-residue chain is ATP synthase subunit c (104 aa).

The next 2 helical transmembrane spans lie at 31-51 and 75-95; these read SMIA…IGMG and MFIA…IALI.

It belongs to the ATPase C chain family. F-type ATPases have 2 components, F(1) - the catalytic core - and F(0) - the membrane proton channel. F(1) has five subunits: alpha(3), beta(3), gamma(1), delta(1), epsilon(1). F(0) has three main subunits: a(1), b(2) and c(10-14). The alpha and beta chains form an alternating ring which encloses part of the gamma chain. F(1) is attached to F(0) by a central stalk formed by the gamma and epsilon chains, while a peripheral stalk is formed by the delta and b chains.

The protein resides in the cell inner membrane. Its function is as follows. F(1)F(0) ATP synthase produces ATP from ADP in the presence of a proton or sodium gradient. F-type ATPases consist of two structural domains, F(1) containing the extramembraneous catalytic core and F(0) containing the membrane proton channel, linked together by a central stalk and a peripheral stalk. During catalysis, ATP synthesis in the catalytic domain of F(1) is coupled via a rotary mechanism of the central stalk subunits to proton translocation. Functionally, key component of the F(0) channel; it plays a direct role in translocation across the membrane. A homomeric c-ring of between 10-14 subunits forms the central stalk rotor element with the F(1) delta and epsilon subunits. This chain is ATP synthase subunit c, found in Sulfurimonas denitrificans (strain ATCC 33889 / DSM 1251) (Thiomicrospira denitrificans (strain ATCC 33889 / DSM 1251)).